The following is a 116-amino-acid chain: Putative pterin-4-alpha-carbinolamine dehydratase (116 aa).

This sequence belongs to the pterin-4-alpha-carbinolamine dehydratase family.

The enzyme catalyses (4aS,6R)-4a-hydroxy-L-erythro-5,6,7,8-tetrahydrobiopterin = (6R)-L-erythro-6,7-dihydrobiopterin + H2O. The chain is Putative pterin-4-alpha-carbinolamine dehydratase from Xylella fastidiosa (strain M23).